Consider the following 293-residue polypeptide: Formamidopyrimidine-DNA glycosylase (293 aa).

Pro-2 (schiff-base intermediate with DNA) is an active-site residue. Glu-3 serves as the catalytic Proton donor. Catalysis depends on Lys-60, which acts as the Proton donor; for beta-elimination activity. DNA contacts are provided by His-110, Arg-129, and Lys-174. The FPG-type zinc finger occupies 259 to 293 (NVYRRTGKKCHACKNLIERQKISGRSTHWCRKCQK). Arg-283 acts as the Proton donor; for delta-elimination activity in catalysis.

Belongs to the FPG family. As to quaternary structure, monomer. It depends on Zn(2+) as a cofactor.

It catalyses the reaction Hydrolysis of DNA containing ring-opened 7-methylguanine residues, releasing 2,6-diamino-4-hydroxy-5-(N-methyl)formamidopyrimidine.. The enzyme catalyses 2'-deoxyribonucleotide-(2'-deoxyribose 5'-phosphate)-2'-deoxyribonucleotide-DNA = a 3'-end 2'-deoxyribonucleotide-(2,3-dehydro-2,3-deoxyribose 5'-phosphate)-DNA + a 5'-end 5'-phospho-2'-deoxyribonucleoside-DNA + H(+). Its function is as follows. Involved in base excision repair of DNA damaged by oxidation or by mutagenic agents. Acts as a DNA glycosylase that recognizes and removes damaged bases. Has a preference for oxidized purines, such as 7,8-dihydro-8-oxoguanine (8-oxoG). Has AP (apurinic/apyrimidinic) lyase activity and introduces nicks in the DNA strand. Cleaves the DNA backbone by beta-delta elimination to generate a single-strand break at the site of the removed base with both 3'- and 5'-phosphates. The chain is Formamidopyrimidine-DNA glycosylase from Prochlorococcus marinus (strain MIT 9515).